Here is a 1049-residue protein sequence, read N- to C-terminus: Toll-like receptor 7 (1049 aa).

Residues 1 to 26 form the signal peptide; sequence MVFPMWTLKRQILILFNIILISKLLG. Residues 27–839 are Extracellular-facing; it reads ARWFPKTLPC…LYTCELDLTN (813 aa). LRR repeat units follow at residues 43 to 64, 65 to 87, 110 to 126, 127 to 149, 151 to 170, and 171 to 195; these read PKNHVIVDCTDKHLTEIPGGIP, TNTTNLTLTINHIPDISPASFHR, NMCIKRLQIKPRSFSGL, TYLKSLYLDGNQLLEIPQGLPPS, QLLSLEANNIFSIRKENLTE, and LANIEILYLGQNCYYRNPCYVSYSI. N-linked (GlcNAc...) asparagine glycosylation is found at N66 and N69. Residue N167 is glycosylated (N-linked (GlcNAc...) asparagine). 2 N-linked (GlcNAc...) asparagine glycosylation sites follow: N202 and N215. LRR repeat units follow at residues 203 to 226, 228 to 247, 248 to 275, 289 to 312, 314 to 337, 339 to 368, 369 to 392, 396 to 419, and 421 to 443; these read LTKLKVLSLKDNNVTAVPTVLPST, TELYLYNNMIAKIQEDDFNN, LNQLQILDLSGNCPRCYNAPFPCAPCKN, LTELKVLRLHSNSLQHVPPRWFKN, NKLQELDLSQNFLAKEIGDAKFLH, LPSLIQLDLSFNFELQVYRASMNLSQAFSS, LKSLKILRIRGYVFKELKSFNLSP, LQNLEVLDLGTNFIKIANLSMFKQ, and KRLKVIDLSVNKISPSGDSSEVG. N361 is a glycosylation site (N-linked (GlcNAc...) asparagine). A glycan (N-linked (GlcNAc...) asparagine) is linked at N413. The N-linked (GlcNAc...) asparagine glycan is linked to N488. LRR repeat units follow at residues 492–515, 516–540, 541–564, and 566–588; these read YKYGQTLDLSKNSIFFVKSSDFQH, LSFLKCLNLSGNLISQTLNGSEFQP, LAELRYLDFSNNRLDLLHSTAFEE, and HKLEVLDISSNSHYFQSEGITHM. 2 N-linked (GlcNAc...) asparagine glycosylation sites follow: N523 and N534. An N-linked (GlcNAc...) asparagine glycan is attached at N590. 8 LRR repeats span residues 595 to 618, 619 to 644, 649 to 672, 674 to 697, 698 to 721, 723 to 745, 746 to 769, and 772 to 795; these read LKVLQKLMMNDNDISSSTSRTMES, ESLRTLEFRGNHLDVLWREGDNRYLQ, LLKLEELDISKNSLSFLPSGVFDG, PPNLKNLSLAKNGLKSFSWKKLQC, LKNLETLDLSHNQLTTVPERLSNC, RSLKNLILKNNQIRSLTKYFLQD, AFQLRYLDLSSNKIQMIQKTSFPE, and LNNLKMLLLHHNRFLCTCDAVWFV. N-linked (GlcNAc...) asparagine glycans are attached at residues N679 and N720. N-linked (GlcNAc...) asparagine glycosylation occurs at N799. Residues 840-860 traverse the membrane as a helical segment; it reads LILFSLSISVSLFLMVMMTAS. Residues 861–1049 are Cytoplasmic-facing; it reads HLYFWDVWYI…AYSQVFKETV (189 aa). One can recognise a TIR domain in the interval 889–1033; the sequence is CCYDAFIVYD…YFWQCLKNAL (145 aa).

Belongs to the Toll-like receptor family. Homodimer. Interacts with MYD88 via their respective TIR domains. Interacts with UNC93B1. Interacts with SMPDL3B. In terms of tissue distribution, detected in brain, placenta, spleen, stomach, small intestine, lung and in plasmacytoid pre-dendritic cells. Expressed in peripheral mononuclear blood cells.

Its subcellular location is the endoplasmic reticulum membrane. It is found in the endosome. The protein resides in the lysosome. It localises to the cytoplasmic vesicle. The protein localises to the phagosome. Activated by guanosine analogs including deoxyguanosine, 7-thia-8-oxoguanosine or 7-deazaguanosine in a RNA-independent manner. Activated by imiquimod. Its function is as follows. Endosomal receptor that plays a key role in innate and adaptive immunity. Controls host immune response against pathogens through recognition of uridine-containing single strand RNAs (ssRNAs) of viral origin or guanosine analogs. Upon binding to agonists, undergoes dimerization that brings TIR domains from the two molecules into direct contact, leading to the recruitment of TIR-containing downstream adapter MYD88 through homotypic interaction. In turn, the Myddosome signaling complex is formed involving IRAK4, IRAK1, TRAF6, TRAF3 leading to activation of downstream transcription factors NF-kappa-B and IRF7 to induce pro-inflammatory cytokines and interferons, respectively. In plasmacytoid dendritic cells, RNASET2 endonuclease cooperates with PLD3 or PLD4 5'-&gt;3' exonucleases to process RNA and release 2',3'-cyclic guanosine monophosphate (2',3'-cGMP) and cytidine-rich RNA fragments that occupy TLR7 ligand-binding pockets and trigger a signaling-competent state. The polypeptide is Toll-like receptor 7 (Homo sapiens (Human)).